The sequence spans 28 residues: uORF1 protein (28 aa).

Its subcellular location is the host cytoplasm. The protein resides in the host cytoskeleton. In terms of biological role, plays a role in the reorganization of host microtubules and intermediate filaments to form a cytoskeletal cage that surrounds the viral factories, protecting the site of viral replication. May play a role in viral infection of human cortical neurons. The protein is uORF1 protein of Zika virus (isolate ZIKV/Human/French Polynesia/10087PF/2013) (ZIKV).